A 68-amino-acid chain; its full sequence is Protein transport protein Sec61 subunit gamma (68 aa).

At methionine 1 to glutamate 32 the chain is on the cytoplasmic side. A helical membrane pass occupies residues phenylalanine 33–isoleucine 61. Topologically, residues asparagine 62–serine 68 are extracellular.

It belongs to the SecE/SEC61-gamma family. The SEC61 channel-forming translocon complex consists of channel-forming core components SEC61A1, SEC61B and SEC61G and different auxiliary components such as SEC62 and SEC63. The SEC61 channel associates with the multi-pass translocon (MPT) complex.

Its subcellular location is the endoplasmic reticulum membrane. Functionally, component of SEC61 channel-forming translocon complex that mediates transport of signal peptide-containing precursor polypeptides across the endoplasmic reticulum (ER). Forms a ribosome receptor and a gated pore in the ER membrane, both functions required for cotranslational translocation of nascent polypeptides. The SEC61 channel is also involved in ER membrane insertion of transmembrane proteins: it mediates membrane insertion of the first few transmembrane segments of proteins, while insertion of subsequent transmembrane regions of multi-pass membrane proteins is mediated by the multi-pass translocon (MPT) complex. This is Protein transport protein Sec61 subunit gamma (sec61g) from Xenopus laevis (African clawed frog).